Here is a 334-residue protein sequence, read N- to C-terminus: Holliday junction branch migration complex subunit RuvB (334 aa).

Residues 4 to 184 (ADRLIQPQLQ…FGIPLRLEFY (181 aa)) are large ATPase domain (RuvB-L). ATP contacts are provided by residues Arg24, Gly65, Lys68, Thr69, Thr70, 131–133 (EDY), Arg174, Tyr184, and Arg221. Thr69 lines the Mg(2+) pocket. The small ATPAse domain (RuvB-S) stretch occupies residues 185–255 (NVKDLSTIVT…VAEQALDLLD (71 aa)). Positions 258–334 (GEGFDYMDRK…YLHFGMIKPE (77 aa)) are head domain (RuvB-H). Residues Arg294, Arg313, and Arg318 each contribute to the DNA site.

Belongs to the RuvB family. Homohexamer. Forms an RuvA(8)-RuvB(12)-Holliday junction (HJ) complex. HJ DNA is sandwiched between 2 RuvA tetramers; dsDNA enters through RuvA and exits via RuvB. An RuvB hexamer assembles on each DNA strand where it exits the tetramer. Each RuvB hexamer is contacted by two RuvA subunits (via domain III) on 2 adjacent RuvB subunits; this complex drives branch migration. In the full resolvosome a probable DNA-RuvA(4)-RuvB(12)-RuvC(2) complex forms which resolves the HJ.

It is found in the cytoplasm. The catalysed reaction is ATP + H2O = ADP + phosphate + H(+). In terms of biological role, the RuvA-RuvB-RuvC complex processes Holliday junction (HJ) DNA during genetic recombination and DNA repair, while the RuvA-RuvB complex plays an important role in the rescue of blocked DNA replication forks via replication fork reversal (RFR). RuvA specifically binds to HJ cruciform DNA, conferring on it an open structure. The RuvB hexamer acts as an ATP-dependent pump, pulling dsDNA into and through the RuvAB complex. RuvB forms 2 homohexamers on either side of HJ DNA bound by 1 or 2 RuvA tetramers; 4 subunits per hexamer contact DNA at a time. Coordinated motions by a converter formed by DNA-disengaged RuvB subunits stimulates ATP hydrolysis and nucleotide exchange. Immobilization of the converter enables RuvB to convert the ATP-contained energy into a lever motion, pulling 2 nucleotides of DNA out of the RuvA tetramer per ATP hydrolyzed, thus driving DNA branch migration. The RuvB motors rotate together with the DNA substrate, which together with the progressing nucleotide cycle form the mechanistic basis for DNA recombination by continuous HJ branch migration. Branch migration allows RuvC to scan DNA until it finds its consensus sequence, where it cleaves and resolves cruciform DNA. In Shewanella sp. (strain ANA-3), this protein is Holliday junction branch migration complex subunit RuvB.